A 130-amino-acid polypeptide reads, in one-letter code: MSMQDPLADMLTRIRNAQMAEKSVVSMPSSTLKVAVAKVLKDEGYIAGYQISSETKPLLSIELKYFEGRPVIEEVKRVSRPGLRQYKSVEELPKVRGGLGVSIVSTNKGVMTDRAARAAGVGGEVLCTVF.

Belongs to the universal ribosomal protein uS8 family. In terms of assembly, part of the 30S ribosomal subunit. Contacts proteins S5 and S12.

Functionally, one of the primary rRNA binding proteins, it binds directly to 16S rRNA central domain where it helps coordinate assembly of the platform of the 30S subunit. In Pseudomonas fluorescens (strain Pf0-1), this protein is Small ribosomal subunit protein uS8.